A 310-amino-acid chain; its full sequence is MSEIQEISKKEQYNLNKLQKRLRRNVGEAIADYNMIEEGDRIMVCLSGGKDSYTMLEILRNLQQSAPVNFSLVAVNLDQKQPGFPEHILPEYLSSLGVEYKIVEENTYGIVKEKIPEGKTTCSLCSRLRRGILYRTATELGATKIALGHHRDDILQTLFLNMFYGGKMKGMPPKLMSDDGKHIVIRPLAYCREKDIERFSQAKGFPIIPCNLCGSQPNLQRQVIADMLRDWDKRYPGRIETMFSAMQNVVPSHLCDTELFDFKGIHHGSEVVNGGDLAFDREEIPMMPAGWTPEDDAAPPMQRLDVLEIK.

The PP-loop motif signature appears at 47-52 (SGGKDS). Cysteine 122, cysteine 125, and cysteine 213 together coordinate [4Fe-4S] cluster.

This sequence belongs to the TtcA family. In terms of assembly, homodimer. The cofactor is Mg(2+). [4Fe-4S] cluster is required as a cofactor.

The protein localises to the cytoplasm. It catalyses the reaction cytidine(32) in tRNA + S-sulfanyl-L-cysteinyl-[cysteine desulfurase] + AH2 + ATP = 2-thiocytidine(32) in tRNA + L-cysteinyl-[cysteine desulfurase] + A + AMP + diphosphate + H(+). The protein operates within tRNA modification. In terms of biological role, catalyzes the ATP-dependent 2-thiolation of cytidine in position 32 of tRNA, to form 2-thiocytidine (s(2)C32). The sulfur atoms are provided by the cysteine/cysteine desulfurase (IscS) system. In Cronobacter sakazakii (strain ATCC BAA-894) (Enterobacter sakazakii), this protein is tRNA-cytidine(32) 2-sulfurtransferase.